The chain runs to 245 residues: DNA polymerase sliding clamp 2 (245 aa).

Belongs to the PCNA family. Homotrimer. The subunits circularize to form a toroid; DNA passes through its center. Replication factor C (RFC) is required to load the toroid on the DNA.

Functionally, sliding clamp subunit that acts as a moving platform for DNA processing. Responsible for tethering the catalytic subunit of DNA polymerase and other proteins to DNA during high-speed replication. The protein is DNA polymerase sliding clamp 2 of Sulfolobus acidocaldarius (strain ATCC 33909 / DSM 639 / JCM 8929 / NBRC 15157 / NCIMB 11770).